Reading from the N-terminus, the 479-residue chain is Ammonium transporter 3 member 2 (479 aa).

11 helical membrane-spanning segments follow: residues 34 to 54 (VAAT…YGGV), 59 to 79 (WAVN…ICWV), 139 to 159 (VVYF…GSLL), 164 to 184 (FLAW…VGAF), 202 to 222 (GGYV…YWVG), 237 to 257 (ILFT…FNGG), 272 to 292 (NTNI…VIFF), 297 to 317 (VVGA…AAGV), 321 to 341 (WAAL…MMIL), 355 to 375 (LGVF…TGLF), and 407 to 427 (IAGG…ICLA).

It belongs to the ammonia transporter channel (TC 1.A.11.2) family.

It localises to the membrane. In terms of biological role, involved in ammonium transport. The sequence is that of Ammonium transporter 3 member 2 (AMT3-2) from Oryza sativa subsp. japonica (Rice).